Reading from the N-terminus, the 108-residue chain is MILQRLFRLSSAVQSAISVSWRRNIGITAVAFNKELDPVQKLFVDKIREYRTKRQTSGGPVDAGPEYQQDLDRELFKLKQMYGKADMNTFPNFTFEDPKFEVVEKPQS.

Residues 1–32 (MILQRLFRLSSAVQSAISVSWRRNIGITAVAF) constitute a mitochondrion transit peptide. Lysine 41, lysine 46, and lysine 79 each carry N6-acetyllysine. N6-acetyllysine; alternate occurs at positions 84 and 99. Lysine 84 and lysine 99 each carry N6-succinyllysine; alternate. The residue at position 105 (lysine 105) is an N6-acetyllysine. The residue at position 108 (serine 108) is a Phosphoserine.

This sequence belongs to the eukaryotic ATPase subunit F6 family. As to quaternary structure, component of the ATP synthase complex composed at least of ATP5F1A/subunit alpha, ATP5F1B/subunit beta, ATP5MC1/subunit c (homooctomer), MT-ATP6/subunit a, MT-ATP8/subunit 8, ATP5ME/subunit e, ATP5MF/subunit f, ATP5MG/subunit g, ATP5MK/subunit k, ATP5MJ/subunit j, ATP5F1C/subunit gamma, ATP5F1D/subunit delta, ATP5F1E/subunit epsilon, ATP5PF/subunit F6, ATP5PB/subunit b, ATP5PD/subunit d, ATP5PO/subunit OSCP. ATP synthase complex consists of a soluble F(1) head domain (subunits alpha(3) and beta(3)) - the catalytic core - and a membrane F(0) domain - the membrane proton channel (subunits c, a, 8, e, f, g, k and j). These two domains are linked by a central stalk (subunits gamma, delta, and epsilon) rotating inside the F1 region and a stationary peripheral stalk (subunits F6, b, d, and OSCP).

It localises to the mitochondrion. Its subcellular location is the mitochondrion inner membrane. Functionally, subunit F6, of the mitochondrial membrane ATP synthase complex (F(1)F(0) ATP synthase or Complex V) that produces ATP from ADP in the presence of a proton gradient across the membrane which is generated by electron transport complexes of the respiratory chain. ATP synthase complex consist of a soluble F(1) head domain - the catalytic core - and a membrane F(1) domain - the membrane proton channel. These two domains are linked by a central stalk rotating inside the F(1) region and a stationary peripheral stalk. During catalysis, ATP synthesis in the catalytic domain of F(1) is coupled via a rotary mechanism of the central stalk subunits to proton translocation. In vivo, can only synthesize ATP although its ATP hydrolase activity can be activated artificially in vitro. Part of the complex F(0) domain. Part of the complex F(0) domain and the peripheric stalk, which acts as a stator to hold the catalytic alpha(3)beta(3) subcomplex and subunit a/ATP6 static relative to the rotary elements. In Bos taurus (Bovine), this protein is ATP synthase peripheral stalk subunit F6, mitochondrial.